The primary structure comprises 390 residues: tRNA(Met) cytidine acetate ligase (390 aa).

ATP is bound by residues 7-20, Gly101, Asn162, and Arg187; that span reads VVEY…HKLH.

This sequence belongs to the TmcAL family.

The protein localises to the cytoplasm. The catalysed reaction is cytidine(34) in elongator tRNA(Met) + acetate + ATP = N(4)-acetylcytidine(34) in elongator tRNA(Met) + AMP + diphosphate. In terms of biological role, catalyzes the formation of N(4)-acetylcytidine (ac(4)C) at the wobble position of elongator tRNA(Met), using acetate and ATP as substrates. First activates an acetate ion to form acetyladenylate (Ac-AMP) and then transfers the acetyl group to tRNA to form ac(4)C34. The polypeptide is tRNA(Met) cytidine acetate ligase (Listeria monocytogenes serotype 4b (strain F2365)).